The sequence spans 321 residues: 2,3,4,5-tetrahydropyridine-2,6-dicarboxylate N-succinyltransferase (321 aa).

Residues Asp-166 and Glu-183 each coordinate Mg(2+). Glu-199 (acyl-anhydride intermediate) is an active-site residue. Residues Arg-201, Gly-216, Ser-219, Ala-242, 257-258 (EA), Gly-265, Lys-281, and 294-297 (RRNS) each bind succinyl-CoA.

It belongs to the type 2 tetrahydrodipicolinate N-succinyltransferase family. In terms of assembly, homotrimer.

It is found in the cytoplasm. The catalysed reaction is (S)-2,3,4,5-tetrahydrodipicolinate + succinyl-CoA + H2O = (S)-2-succinylamino-6-oxoheptanedioate + CoA. It functions in the pathway amino-acid biosynthesis; L-lysine biosynthesis via DAP pathway; LL-2,6-diaminopimelate from (S)-tetrahydrodipicolinate (succinylase route): step 1/3. Catalyzes the conversion of the cyclic tetrahydrodipicolinate (THDP) into the acyclic N-succinyl-L-2-amino-6-oxopimelate using succinyl-CoA. The polypeptide is 2,3,4,5-tetrahydropyridine-2,6-dicarboxylate N-succinyltransferase (Rothia mucilaginosa (strain DY-18) (Stomatococcus mucilaginosus)).